Consider the following 119-residue polypeptide: Large ribosomal subunit protein bL17 (119 aa).

The protein belongs to the bacterial ribosomal protein bL17 family. In terms of assembly, part of the 50S ribosomal subunit. Contacts protein L32.

In Acholeplasma laidlawii (strain PG-8A), this protein is Large ribosomal subunit protein bL17.